We begin with the raw amino-acid sequence, 395 residues long: Zinc-regulated GTPase metalloprotein activator 1F (395 aa).

A disordered region spans residues M1–L22. Residues V8 to P20 are compositionally biased toward acidic residues. The psi-PxLVp motif signature appears at E17–P24. G49–T56 lines the GTP pocket. Zn(2+) contacts are provided by C107, C109, and C110. Residues C107–C110 carry the CXCC motif motif. GTP-binding positions include C110–D114 and N203–D206. Positions I274–V377 constitute a CobW C-terminal domain.

It belongs to the SIMIBI class G3E GTPase family. ZNG1 subfamily.

The protein localises to the nucleus. The catalysed reaction is GTP + H2O = GDP + phosphate + H(+). Functionally, zinc chaperone that directly transfers zinc cofactor to target metalloproteins, thereby activating them. Catalyzes zinc insertion into the active site of methionine aminopeptidase METAP1, which function to cleave the initiator methionine from polypeptides during or after protein translation. Mechanistically, the N-terminal psi-PxLVp motif binds to the C6H2-type zinc finger of inactive form of METAP1. After formation of the docked complex, zinc is transferred from the CXCC motif in the GTPase domain of ZNG1F to the zinc binding site in the peptidase domain of METAP1 in a process requiring GTP hydrolysis. GTP/GDP exchange is required for release of active METAP1. In Homo sapiens (Human), this protein is Zinc-regulated GTPase metalloprotein activator 1F.